The sequence spans 788 residues: DNA ligase (788 aa).

NAD(+) contacts are provided by residues 35-39 (DAEYD), 84-85 (SL), and Glu-124. Lys-126 (N6-AMP-lysine intermediate) is an active-site residue. NAD(+)-binding residues include Arg-147, Glu-184, Lys-300, and Lys-324. Zn(2+) contacts are provided by Cys-418, Cys-421, Cys-448, and Cys-454. One can recognise a BRCT domain in the interval 707 to 788 (AEGLPLAGQT…FIERLAQLGS (82 aa)).

The protein belongs to the NAD-dependent DNA ligase family. LigA subfamily. The cofactor is Mg(2+). Mn(2+) is required as a cofactor.

It carries out the reaction NAD(+) + (deoxyribonucleotide)n-3'-hydroxyl + 5'-phospho-(deoxyribonucleotide)m = (deoxyribonucleotide)n+m + AMP + beta-nicotinamide D-nucleotide.. In terms of biological role, DNA ligase that catalyzes the formation of phosphodiester linkages between 5'-phosphoryl and 3'-hydroxyl groups in double-stranded DNA using NAD as a coenzyme and as the energy source for the reaction. It is essential for DNA replication and repair of damaged DNA. The protein is DNA ligase of Stutzerimonas stutzeri (strain A1501) (Pseudomonas stutzeri).